A 274-amino-acid polypeptide reads, in one-letter code: Diaminopimelate epimerase (274 aa).

Positions 11, 44, and 64 each coordinate substrate. Residue Cys73 is the Proton donor of the active site. Residues 74 to 75 (GN), Asn157, Asn190, and 208 to 209 (ER) each bind substrate. The Proton acceptor role is filled by Cys217. Residue 218–219 (GS) coordinates substrate.

This sequence belongs to the diaminopimelate epimerase family. Homodimer.

It is found in the cytoplasm. The catalysed reaction is (2S,6S)-2,6-diaminopimelate = meso-2,6-diaminopimelate. Its pathway is amino-acid biosynthesis; L-lysine biosynthesis via DAP pathway; DL-2,6-diaminopimelate from LL-2,6-diaminopimelate: step 1/1. Catalyzes the stereoinversion of LL-2,6-diaminopimelate (L,L-DAP) to meso-diaminopimelate (meso-DAP), a precursor of L-lysine and an essential component of the bacterial peptidoglycan. The chain is Diaminopimelate epimerase from Shigella boydii serotype 18 (strain CDC 3083-94 / BS512).